The primary structure comprises 660 residues: Galactocerebrosidase (660 aa).

The first 18 residues, 1 to 18 (MQTHNFLCIISVILGCSA), serve as a signal peptide directing secretion. Thr-87 and Trp-129 together coordinate substrate. N-linked (GlcNAc...) asparagine glycosylation occurs at Asn-147. Asn-175 contacts substrate. The active-site Proton donor/acceptor is Glu-176. The Nucleophile role is filled by Glu-251. Cys-264 and Cys-371 are oxidised to a cystine. Residues Asn-293 and Asn-356 are each glycosylated (N-linked (GlcNAc...) asparagine). Arg-373 serves as a coordination point for substrate. N-linked (GlcNAc...) asparagine glycosylation is found at Asn-413, Asn-465, Asn-495, Asn-499, Asn-537, and Asn-578.

The protein belongs to the glycosyl hydrolase 59 family.

It is found in the lysosome. It catalyses the reaction a beta-D-galactosyl-(1&lt;-&gt;1')-N-acylsphing-4-enine + H2O = an N-acylsphing-4-enine + D-galactose. The enzyme catalyses beta-D-galactosyl-(1&lt;-&gt;1)-sphing-4-enine + H2O = sphing-4-enine + D-galactose. It carries out the reaction a D-galactosylceramide + H2O = an N-acyl-sphingoid base + D-galactose. In terms of biological role, hydrolyzes the galactose ester bonds of glycolipids such as galactosylceramide and galactosylsphingosine. This chain is Galactocerebrosidase, found in Danio rerio (Zebrafish).